Here is a 50-residue protein sequence, read N- to C-terminus: Monellin chain B (50 aa).

Heterodimer of an A chain and a B chain.

In terms of biological role, taste-modifying protein; intensely sweet-tasting protein. This is Monellin chain B from Dioscoreophyllum cumminsii (Serendipity berry).